The chain runs to 198 residues: Nucleoid occlusion factor SlmA (198 aa).

One can recognise an HTH tetR-type domain in the interval 9–70 (RNRREEILQS…SLIEFIEDSL (62 aa)). The segment at residues 33–52 (TTAKLAASVGVSEAALYRHF) is a DNA-binding region (H-T-H motif). Residues 117–145 (EQDRLQGRINQLFERIEAQLRQVLREKKM) adopt a coiled-coil conformation.

This sequence belongs to the nucleoid occlusion factor SlmA family. In terms of assembly, homodimer. Interacts with FtsZ.

It localises to the cytoplasm. It is found in the nucleoid. Its function is as follows. Required for nucleoid occlusion (NO) phenomenon, which prevents Z-ring formation and cell division over the nucleoid. Acts as a DNA-associated cell division inhibitor that binds simultaneously chromosomal DNA and FtsZ, and disrupts the assembly of FtsZ polymers. SlmA-DNA-binding sequences (SBS) are dispersed on non-Ter regions of the chromosome, preventing FtsZ polymerization at these regions. The polypeptide is Nucleoid occlusion factor SlmA (Cronobacter sakazakii (strain ATCC BAA-894) (Enterobacter sakazakii)).